Consider the following 578-residue polypeptide: Monooxygenase cfoE (578 aa).

The helical transmembrane segment at Ile549–Phe569 threads the bilayer.

The protein belongs to the FMO family. FAD serves as cofactor.

The protein localises to the membrane. The protein operates within secondary metabolite biosynthesis; flavonoid biosynthesis. Monooxygenase; part of the gene cluster that mediates the biosynthesis of chlorflavonin, a fungal flavonoid with acetolactate synthase inhibitory activity. Within the pathway, cfoE is responsible for the chlorination of the flavonoid skeleton at position C3'. The pathway begins with the PKS-NRPS hybrid synthetase cfoA that uses benzoic acid or p-hydroxybenzoic acid as a starter unit with four rounds of chain elongation using malonyl-CoA to form the chalcone skeleton. Then, a new type of chalcone isomerase, cfoK, catalyzes the conversion of the chalcone into a flavanone by a histidine-mediated oxa-Michael addition mechanism. The desaturation of flavanone to flavone is catalyzed by a new type of flavone synthase, the flavin mononucleotide (FMN)-dependent oxidoreductase cfoJ. Monooxygenases cfoF, cfoG, and P450 cfoH are responsible for the hydroxylation of the flavonoid skeleton at sites C3, C8, and C2', respectively. Like cfoF, the dehydratase cfoI plays also a role in the hydroxylation of position C3. Methyltransferases cfoB, cfoC, and cfoD then catalyze the methylation of C7-OH, C8-OH, and C3-OH, respectively. Finally, the monooxygenase cfoE is responsible for the chlorination of flavonoid at position C3'. This is Monooxygenase cfoE from Aspergillus candidus.